A 323-amino-acid chain; its full sequence is tRNA dimethylallyltransferase (323 aa).

12–19 (GPTAAGKT) is a binding site for ATP. Position 14–19 (14–19 (TAAGKT)) interacts with substrate. Interaction with substrate tRNA regions lie at residues 37–40 (DSAL) and 161–165 (QRLIR).

The protein belongs to the IPP transferase family. As to quaternary structure, monomer. Mg(2+) serves as cofactor.

The enzyme catalyses adenosine(37) in tRNA + dimethylallyl diphosphate = N(6)-dimethylallyladenosine(37) in tRNA + diphosphate. Its function is as follows. Catalyzes the transfer of a dimethylallyl group onto the adenine at position 37 in tRNAs that read codons beginning with uridine, leading to the formation of N6-(dimethylallyl)adenosine (i(6)A). The polypeptide is tRNA dimethylallyltransferase (Pseudomonas savastanoi pv. phaseolicola (strain 1448A / Race 6) (Pseudomonas syringae pv. phaseolicola (strain 1448A / Race 6))).